The following is a 195-amino-acid chain: PAP fimbrial minor pilin protein (195 aa).

Positions methionine 1–alanine 22 are cleaved as a signal peptide. Cysteine 58 and cysteine 97 are disulfide-bonded.

Belongs to the fimbrial protein family.

The protein resides in the secreted. Its subcellular location is the fimbrium. In terms of biological role, fimbriae (also called pili), polar filaments radiating from the surface of the bacterium to a length of 0.5-1.5 micrometers and numbering 100-300 per cell, enable bacteria to colonize the epithelium of specific host organs. PapH seems to anchor the pilus to the bacterial cell. In addition the stoichiometric relationship between PapH and PapA determines the pilus length. In Escherichia coli, this protein is PAP fimbrial minor pilin protein (papH).